The chain runs to 889 residues: MGCLGNQLLIALLLLSASGIYCVQYVTVFYGIPAWRNATVPLFCATKNRDTWGTTQCLPDNGDYSELAINVTEAFDAWDNTVTEQAIEDVWNLFETSIKPCVKLTPLCITMRCNKSETDRWGLTGTPAPTTTQTTTTQASTTPTSPITAKVVNDSDPCIKINNCTGLEQEPMVSCKFNMTGLKRDKKREYNETWYSRDLVCEQNSNETDSKCYMNHCNTSVIQESCDKHYWDAIRFRYCAPPGYALLRCNDSNYSGFAPNCTKVVVSSCTRMMETQTSTWFGFNGTRAENRTYIYWHGRSNRTIISLNKYYNLTMRCRRPGNKTVLPVTIMSGLVFHSQPINERPKQAWCWFGGEWKKAIQEVKETLVKHPRYTGTNKTEQIKLTAPGGGDPEVTFMWTNCRGEFLYCKMNWFLNWVENIQNGSRWTSQNQKERQRRNYVPCHIRQIINTWHKVGKNVYLPPREGDLTCNSTVTSLIAEIDWINGNETNITMSAEVAELYRLELGDYKLVEITPIAFAPTSVKRYTTTGASRNKRGVFVLGFLGFLATAGSAMSAASVTLSAQSRTLLAGIVQQQQQLLDVVKRQQELLRLTVWGAKNLQTRVTAIEKYLKDQAQLNSWGCAFRQVCHTTVPRPNDTLTPNWNNMTWQEWEKQVNFLEANITQSLEEAQIQQEKNTYELQKLNSWDIFGNWFDLTSWIKYIQYGVLIVLGVIGLRIVIYVVQMLARLRQGYRPVFSSPPAYVQQIPIQTGQELPTKEGEEGDGGGRGGNRSWPWQIEYIHFLIRQLIRLLTWLFSSCRDWLLRNCQTLQPVLQSLSRTLQRAREVIRVQIAYLQYGWRYLQEAAQAWWKFVRETLASAWRDLWETLGRVGRGILAIPRRIRQGLELTLL.

Residues 1 to 22 (MGCLGNQLLIALLLLSASGIYC) form the signal peptide. Topologically, residues 23-704 (VQYVTVFYGI…TSWIKYIQYG (682 aa)) are extracellular. Asn-37 carries N-linked (GlcNAc...) asparagine; by host glycosylation. An intrachain disulfide couples Cys-44 to Cys-57. N-linked (GlcNAc...) asparagine; by host glycosylation is found at Asn-70 and Asn-114. 5 disulfides stabilise this stretch: Cys-101/Cys-226, Cys-108/Cys-217, Cys-113/Cys-175, Cys-239/Cys-269, and Cys-249/Cys-261. The V1 stretch occupies residues 113-174 (CNKSETDRWG…TGLEQEPMVS (62 aa)). The disordered stretch occupies residues 120–145 (RWGLTGTPAPTTTQTTTTQASTTPTS). Residues 126–145 (TPAPTTTQTTTTQASTTPTS) show a composition bias toward low complexity. N-linked (GlcNAc...) asparagine; by host glycosylation is found at Asn-153, Asn-163, Asn-178, Asn-191, Asn-206, Asn-218, Asn-250, Asn-253, Asn-260, Asn-284, Asn-290, Asn-301, Asn-312, Asn-322, Asn-377, Asn-422, Asn-470, Asn-486, and Asn-489. Residues 175–217 (CKFNMTGLKRDKKREYNETWYSRDLVCEQNSNETDSKCYMNHC) are V2. Positions 317 to 349 (CRRPGNKTVLPVTIMSGLVFHSQPINERPKQAW) are V3. Cys-317 and Cys-350 are disulfide-bonded. Disulfide bonds link Cys-401-Cys-469 and Cys-408-Cys-442. Residues 408–442 (CKMNWFLNWVENIQNGSRWTSQNQKERQRRNYVPC) form a V4 region. A V5 region spans residues 485 to 492 (GNETNITM). Residues 536-556 (GVFVLGFLGFLATAGSAMSAA) are fusion peptide. Residues 599-615 (LQTRVTAIEKYLKDQAQ) form an immunosuppression region. N-linked (GlcNAc...) asparagine; by host glycosylation is found at Asn-635, Asn-644, and Asn-660. Residues 648–675 (QEWEKQVNFLEANITQSLEEAQIQQEKN) adopt a coiled-coil conformation. The interval 681-702 (KLNSWDIFGNWFDLTSWIKYIQ) is MPER; binding to GalCer. The chain crosses the membrane as a helical span at residues 705–725 (VLIVLGVIGLRIVIYVVQMLA). Residues 726 to 889 (RLRQGYRPVF…IRQGLELTLL (164 aa)) lie on the Cytoplasmic side of the membrane. The short motif at 731–734 (YRPV) is the YXXV motif; contains endocytosis signal element. Cys-797 carries S-palmitoyl cysteine; by host lipidation. Residues 888 to 889 (LL) carry the Di-leucine internalization motif motif.

As to quaternary structure, the mature envelope protein (Env) consists of a homotrimer of non-covalently associated gp120-gp41 heterodimers. The resulting complex protrudes from the virus surface as a spike. Interacts with host CD4 and CCR5. Gp120 also interacts with the C-type lectins CD209/DC-SIGN and CLEC4M/DC-SIGNR (collectively referred to as DC-SIGN(R)). In terms of assembly, the mature envelope protein (Env) consists of a homotrimer of non-covalently associated gp120-gp41 heterodimers. The resulting complex protrudes from the virus surface as a spike. In terms of processing, specific enzymatic cleavages in vivo yield mature proteins. Envelope glycoproteins are synthesized as an inactive precursor that is heavily N-glycosylated and processed likely by host cell furin in the Golgi to yield the mature SU and TM proteins. The cleavage site between SU and TM requires the minimal sequence [KR]-X-[KR]-R. Post-translationally, palmitoylation of the transmembrane protein and of Env polyprotein (prior to its proteolytic cleavage) is essential for their association with host cell membrane lipid rafts. Palmitoylation is therefore required for envelope trafficking to classical lipid rafts, but not for viral replication.

It is found in the virion membrane. Its subcellular location is the host cell membrane. The protein localises to the host endosome membrane. In terms of biological role, the surface protein gp120 (SU) attaches the virus to the host lymphoid cell by binding to the primary receptor CD4. This interaction induces a structural rearrangement creating a high affinity binding site for a chemokine coreceptor like CCR5. This peculiar 2 stage receptor-interaction strategy allows gp120 to maintain the highly conserved coreceptor-binding site in a cryptic conformation, protected from neutralizing antibodies. These changes are transmitted to the transmembrane protein gp41 and are thought to activate its fusogenic potential by unmasking its fusion peptide. Functionally, surface protein gp120 (SU) may target the virus to gut-associated lymphoid tissue (GALT) by binding host ITGA4/ITGB7 (alpha-4/beta-7 integrins), a complex that mediates T-cell migration to the GALT. Interaction between gp120 and ITGA4/ITGB7 would allow the virus to enter GALT early in the infection, infecting and killing most of GALT's resting CD4+ T-cells. This T-cell depletion is believed to be the major insult to the host immune system leading to AIDS. The surface protein gp120 is a ligand for CD209/DC-SIGN and CLEC4M/DC-SIGNR, which are respectively found on dendritic cells (DCs), and on endothelial cells of liver sinusoids and lymph node sinuses. These interactions allow capture of viral particles at mucosal surfaces by these cells and subsequent transmission to permissive cells. DCs are professional antigen presenting cells, critical for host immunity by inducing specific immune responses against a broad variety of pathogens. They act as sentinels in various tissues where they take up antigen, process it, and present it to T-cells following migration to lymphoid organs. SIV subverts the migration properties of dendritic cells to gain access to CD4+ T-cells in lymph nodes. Virus transmission to permissive T-cells occurs either in trans (without DCs infection, through viral capture and transmission), or in cis (following DCs productive infection, through the usual CD4-gp120 interaction), thereby inducing a robust infection. In trans infection, bound virions remain infectious over days and it is proposed that they are not degraded, but protected in non-lysosomal acidic organelles within the DCs close to the cell membrane thus contributing to the viral infectious potential during DCs' migration from the periphery to the lymphoid tissues. On arrival at lymphoid tissues, intact virions recycle back to DCs' cell surface allowing virus transmission to CD4+ T-cells. Virion capture also seems to lead to MHC-II-restricted viral antigen presentation, and probably to the activation of SIV-specific CD4+ cells. Its function is as follows. The transmembrane protein gp41 (TM) acts as a class I viral fusion protein. Under the current model, the protein has at least 3 conformational states: pre-fusion native state, pre-hairpin intermediate state, and post-fusion hairpin state. During fusion of viral and target intracellular membranes, the coiled coil regions (heptad repeats) assume a trimer-of-hairpins structure, positioning the fusion peptide in close proximity to the C-terminal region of the ectodomain. The formation of this structure appears to drive apposition and subsequent fusion of viral and target cell membranes. Complete fusion occurs in host cell endosomes. The virus undergoes clathrin-dependent internalization long before endosomal fusion, thus minimizing the surface exposure of conserved viral epitopes during fusion and reducing the efficacy of inhibitors targeting these epitopes. Membranes fusion leads to delivery of the nucleocapsid into the cytoplasm. In terms of biological role, the envelope glycoprotein gp160 precursor down-modulates cell surface CD4 antigen by interacting with it in the endoplasmic reticulum and blocking its transport to the cell surface. Functionally, the gp120-gp41 heterodimer allows rapid transcytosis of the virus through CD4 negative cells such as simple epithelial monolayers of the intestinal, rectal and endocervical epithelial barriers. Both gp120 and gp41 specifically recognize glycosphingolipids galactosyl-ceramide (GalCer) or 3' sulfo-galactosyl-ceramide (GalS) present in the lipid rafts structures of epithelial cells. Binding to these alternative receptors allows the rapid transcytosis of the virus through the epithelial cells. This transcytotic vesicle-mediated transport of virions from the apical side to the basolateral side of the epithelial cells does not involve infection of the cells themselves. This chain is Envelope glycoprotein gp160 (env), found in Simian immunodeficiency virus (isolate PBj14/BCL-3) (SIV-sm).